The following is a 383-amino-acid chain: Soluble hydrogenase 42 kDa subunit (383 aa).

Lysine 194 is modified (N6-(pyridoxal phosphate)lysine).

This sequence belongs to the class-V pyridoxal-phosphate-dependent aminotransferase family. In terms of assembly, heterodimer of a large and a small subunit. The cofactor is pyridoxal 5'-phosphate.

Its subcellular location is the cytoplasm. In terms of biological role, soluble hydrogenase catalyzes both production and consumption of hydrogen from suitable artificial electron donors or acceptors. This subunit catalyzes the tritium-exchange activity. This Anabaena cylindrica protein is Soluble hydrogenase 42 kDa subunit.